Here is a 147-residue protein sequence, read N- to C-terminus: Ribosome-binding factor A (147 aa).

The tract at residues 127-147 (AAEARHAGEPDPYKTDRDDAE) is disordered.

It belongs to the RbfA family. Monomer. Binds 30S ribosomal subunits, but not 50S ribosomal subunits or 70S ribosomes.

It is found in the cytoplasm. Its function is as follows. One of several proteins that assist in the late maturation steps of the functional core of the 30S ribosomal subunit. Associates with free 30S ribosomal subunits (but not with 30S subunits that are part of 70S ribosomes or polysomes). Required for efficient processing of 16S rRNA. May interact with the 5'-terminal helix region of 16S rRNA. In Nocardia farcinica (strain IFM 10152), this protein is Ribosome-binding factor A.